Reading from the N-terminus, the 219-residue chain is Ribose-5-phosphate isomerase A (219 aa).

Residues 28–31 (SGST), 81–84 (DGAD), and 94–97 (KGGG) each bind substrate. The active-site Proton acceptor is glutamate 103. Lysine 121 lines the substrate pocket.

This sequence belongs to the ribose 5-phosphate isomerase family. As to quaternary structure, homodimer.

The enzyme catalyses aldehydo-D-ribose 5-phosphate = D-ribulose 5-phosphate. The protein operates within carbohydrate degradation; pentose phosphate pathway; D-ribose 5-phosphate from D-ribulose 5-phosphate (non-oxidative stage): step 1/1. Catalyzes the reversible conversion of ribose-5-phosphate to ribulose 5-phosphate. The chain is Ribose-5-phosphate isomerase A from Haemophilus influenzae (strain ATCC 51907 / DSM 11121 / KW20 / Rd).